A 680-amino-acid polypeptide reads, in one-letter code: tRNA 5-methylaminomethyl-2-thiouridine biosynthesis bifunctional protein MnmC (680 aa).

Positions 1–267 (MTAEPNKPCQ…MAAILSSDAP (267 aa)) are tRNA (mnm(5)s(2)U34)-methyltransferase. Residues 273–680 (IGGGLASAHL…LRKLLKGKAL (408 aa)) form an FAD-dependent cmnm(5)s(2)U34 oxidoreductase region.

This sequence in the N-terminal section; belongs to the methyltransferase superfamily. tRNA (mnm(5)s(2)U34)-methyltransferase family. In the C-terminal section; belongs to the DAO family. FAD serves as cofactor.

It localises to the cytoplasm. It catalyses the reaction 5-aminomethyl-2-thiouridine(34) in tRNA + S-adenosyl-L-methionine = 5-methylaminomethyl-2-thiouridine(34) in tRNA + S-adenosyl-L-homocysteine + H(+). Its function is as follows. Catalyzes the last two steps in the biosynthesis of 5-methylaminomethyl-2-thiouridine (mnm(5)s(2)U) at the wobble position (U34) in tRNA. Catalyzes the FAD-dependent demodification of cmnm(5)s(2)U34 to nm(5)s(2)U34, followed by the transfer of a methyl group from S-adenosyl-L-methionine to nm(5)s(2)U34, to form mnm(5)s(2)U34. This is tRNA 5-methylaminomethyl-2-thiouridine biosynthesis bifunctional protein MnmC from Shewanella putrefaciens (strain CN-32 / ATCC BAA-453).